The sequence spans 269 residues: Phosphate import ATP-binding protein PstB 2 (269 aa).

One can recognise an ABC transporter domain in the interval 22 to 264 (LSTNDLRVFY…PSLQSTEDYV (243 aa)). 55–62 (GPSGSGKS) lines the ATP pocket.

This sequence belongs to the ABC transporter superfamily. Phosphate importer (TC 3.A.1.7) family. The complex is composed of two ATP-binding proteins (PstB), two transmembrane proteins (PstC and PstA) and a solute-binding protein (PstS).

The protein resides in the cell membrane. It catalyses the reaction phosphate(out) + ATP + H2O = ADP + 2 phosphate(in) + H(+). Functionally, part of the ABC transporter complex PstSACB involved in phosphate import. Responsible for energy coupling to the transport system. The polypeptide is Phosphate import ATP-binding protein PstB 2 (Lactococcus lactis subsp. lactis (strain IL1403) (Streptococcus lactis)).